The following is a 512-amino-acid chain: Rab11 family-interacting protein 2 (512 aa).

The region spanning Met1–Phe120 is the C2 domain. The interval Val15–Ala102 is necessary for its cellular translocation to the plasma membrane. Disordered regions lie at residues Asp169–Glu239 and Val262–Gln285. The span at Gly178 to Ile188 shows a compositional bias: polar residues. Positions His226 to Met236 are enriched in low complexity. Ser227 carries the phosphoserine; by MARK2 modification. At Ser277 the chain carries Phosphoserine. Positions Asn323–Phe325 match the NPF 1 motif. The span at Glu361–Lys374 shows a compositional bias: basic and acidic residues. A disordered region spans residues Glu361–Phe392. 2 short sequence motifs (NPF) span residues Asn406–Phe408 and Asn440–Phe442. The FIP-RBD domain occupies Pro437 to Pro499. The tract at residues Glu465–Ser512 is necessary for interaction with AP2A1, RAB11A, subcellular location, endocytosis activity and homooligomerization.

As to quaternary structure, homooligomerizes in a Rab11-independent manner. Forms a heterooligomeric complex with RAB11FIP4. Interacts with AP2A1, MYO5B, RAB25 and REPS1. Interacts with RAB11A and RAB11B (activated GTP-bound form). Interacts with NPC1L1. Interacts (via NPF motifs) with EHD1 and EHD3. Interacts with TICAM2; this interaction directs RAB11FIP2 to the phagosome. Interacts with RAB14 and RAB25 (GTP-bound forms). Phosphorylation at Ser-227 by MARK2 regulates epithelial cell polarity.

It is found in the cell projection. It localises to the phagocytic cup. The protein localises to the cell membrane. The protein resides in the recycling endosome membrane. In terms of biological role, a Rab11 effector binding preferentially phosphatidylinositol 3,4,5-trisphosphate (PtdInsP3) and phosphatidic acid (PA) and acting in the regulation of the transport of vesicles from the endosomal recycling compartment (ERC) to the plasma membrane. Involved in insulin granule exocytosis. Also involved in receptor-mediated endocytosis and membrane trafficking of recycling endosomes, probably originating from clathrin-coated vesicles. Required in a complex with MYO5B and RAB11 for the transport of NPC1L1 to the plasma membrane. Also acts as a regulator of cell polarity. Plays an essential role in phagocytosis through a mechanism involving TICAM2, RAC1 and CDC42 Rho GTPases for controlling actin-dynamics. This Homo sapiens (Human) protein is Rab11 family-interacting protein 2 (RAB11FIP2).